The sequence spans 430 residues: Cysteate synthase (430 aa).

Position 106 is an N6-(pyridoxal phosphate)lysine (lysine 106). The pyridoxal 5'-phosphate site is built by asparagine 132 and threonine 381.

This sequence belongs to the threonine synthase family. Cysteate synthase subfamily. Homotrimer. Pyridoxal 5'-phosphate is required as a cofactor.

It catalyses the reaction O-phospho-L-serine + sulfite + H(+) = L-cysteate + phosphate. The protein operates within cofactor biosynthesis; coenzyme M biosynthesis. In terms of biological role, specifically catalyzes the beta-elimination of phosphate from L-phosphoserine and the beta-addition of sulfite to the dehydroalanine intermediate to produce L-cysteate. In Methanoculleus marisnigri (strain ATCC 35101 / DSM 1498 / JR1), this protein is Cysteate synthase.